Reading from the N-terminus, the 221-residue chain is C-8 sterol isomerase (221 aa).

A helical membrane pass occupies residues 5–25 (ISGFLRFVAVLLAVVSPLVYL).

This sequence belongs to the ERG2 family.

It localises to the endoplasmic reticulum membrane. The protein operates within steroid metabolism; ergosterol biosynthesis; ergosterol from zymosterol: step 2/5. Its function is as follows. Catalyzes the reaction which results in unsaturation at C-7 in the B ring of sterols. This is C-8 sterol isomerase (ERG2) from Pyricularia oryzae (strain 70-15 / ATCC MYA-4617 / FGSC 8958) (Rice blast fungus).